We begin with the raw amino-acid sequence, 652 residues long: Iron-regulated outer membrane virulence protein (652 aa).

A signal peptide spans 1-25 (MSRFNPSPVSLSVTLGLMFSASAFA). Positions 33–40 (ETMVVTAA) match the TonB box motif. The 118-residue stretch at 45–162 (VIQNAPASIS…IGGVINIITR (118 aa)) folds into the TBDR plug domain. One can recognise a TBDR beta-barrel domain in the interval 167-652 (QWSGNVQLST…RYWLGLDIAF (486 aa)). Residues 635–652 (YGYVEDGRRYWLGLDIAF) carry the TonB C-terminal box motif.

This sequence belongs to the TonB-dependent receptor family.

Its subcellular location is the cell outer membrane. In terms of biological role, involved in the initial step of iron uptake by binding ferric vibriobactin, an iron chelatin siderophore that allows V.cholerae to extract iron from the environment. The sequence is that of Iron-regulated outer membrane virulence protein (irgA) from Vibrio cholerae serotype O1 (strain ATCC 39541 / Classical Ogawa 395 / O395).